The following is a 206-amino-acid chain: Small ribosomal subunit protein uS4 (206 aa).

In terms of domain architecture, S4 RNA-binding spans 96–156; it reads GRLDNVVYRM…EKAKKQSRVK (61 aa).

Belongs to the universal ribosomal protein uS4 family. In terms of assembly, part of the 30S ribosomal subunit. Contacts protein S5. The interaction surface between S4 and S5 is involved in control of translational fidelity.

Functionally, one of the primary rRNA binding proteins, it binds directly to 16S rRNA where it nucleates assembly of the body of the 30S subunit. In terms of biological role, with S5 and S12 plays an important role in translational accuracy. The sequence is that of Small ribosomal subunit protein uS4 from Salmonella typhi.